We begin with the raw amino-acid sequence, 65 residues long: MGKLRVTYVKSAIGYARDQKETLAALGLRRLNQSVLKPDNPSVRGMLFKVQHLVKVEEVEDEVQA.

The protein belongs to the universal ribosomal protein uL30 family. As to quaternary structure, part of the 50S ribosomal subunit.

This is Large ribosomal subunit protein uL30 from Chloroflexus aurantiacus (strain ATCC 29366 / DSM 635 / J-10-fl).